Reading from the N-terminus, the 181-residue chain is Transcriptional repressor NrdR (181 aa).

A zinc finger spans residues 3-34; sequence CPFCRHPDSRVVDSREAEEGSAIRRRRSCLSC. The ATP-cone domain maps to 46 to 136; that stretch reads LQVRKRSGAA…VYLAFESLTD (91 aa). The tract at residues 148–181 is disordered; that stretch reads AAGPPTTRDGPARPVPRGAVDVSPVIGTQQVHSR.

Belongs to the NrdR family. Requires Zn(2+) as cofactor.

Its function is as follows. Negatively regulates transcription of bacterial ribonucleotide reductase nrd genes and operons by binding to NrdR-boxes. This Frankia casuarinae (strain DSM 45818 / CECT 9043 / HFP020203 / CcI3) protein is Transcriptional repressor NrdR.